We begin with the raw amino-acid sequence, 121 residues long: uncharacterized protein (121 aa).

Residues 6 to 26 (ITTASILLVVIVAFCAAAPMI) form a helical membrane-spanning segment.

Its subcellular location is the membrane. This is an uncharacterized protein from Caenorhabditis elegans.